The following is a 366-amino-acid chain: Acetylserotonin O-methyltransferase 3 (366 aa).

Positions 209, 232, 253, and 267 each coordinate S-adenosyl-L-homocysteine. H271 serves as the catalytic Proton acceptor. Active-site residues include E302 and E332.

Belongs to the class I-like SAM-binding methyltransferase superfamily. Cation-independent O-methyltransferase family. Homodimer. As to expression, expressed at low levels in roots, shoots, leaves, stems and flowers.

It is found in the cytoplasm. It carries out the reaction N-acetylserotonin + S-adenosyl-L-methionine = melatonin + S-adenosyl-L-homocysteine + H(+). It participates in aromatic compound metabolism; melatonin biosynthesis; melatonin from serotonin: step 1/2. Methyltransferase which catalyzes the transfer of a methyl group onto N-acetylserotonin, producing melatonin (N-acetyl-5-methoxytryptamine). In Oryza sativa subsp. japonica (Rice), this protein is Acetylserotonin O-methyltransferase 3.